The sequence spans 182 residues: Large ribosomal subunit protein uL6 (182 aa).

The protein belongs to the universal ribosomal protein uL6 family. In terms of assembly, part of the 50S ribosomal subunit.

In terms of biological role, this protein binds to the 23S rRNA, and is important in its secondary structure. It is located near the subunit interface in the base of the L7/L12 stalk, and near the tRNA binding site of the peptidyltransferase center. In Nostoc sp. (strain PCC 7120 / SAG 25.82 / UTEX 2576), this protein is Large ribosomal subunit protein uL6.